The chain runs to 876 residues: Pre-mRNA-splicing factor ATP-dependent RNA helicase-like protein PRP2 (876 aa).

The interval 1–111 (MSSITSETGK…KGLLGDSENE (111 aa)) is disordered. N-acetylserine is present on S2. Polar residues predominate over residues 61-70 (VFSNTNQGPE). In terms of domain architecture, Helicase ATP-binding spans 233–399 (LQEIKKNQVL…FDNCPIFNVP (167 aa)). Position 246–253 (246–253 (GETGSGKT)) interacts with ATP. Residues 346–349 (DEAH) carry the DEAH box motif. The Helicase C-terminal domain maps to 424 to 598 (TIFQIHTTQS…NTVLLLLSLG (175 aa)).

The protein belongs to the DEAD box helicase family. DEAH subfamily. As to quaternary structure, interacts directly with pre-mRNA. According to PubMed:2251118, associated with spliceosomes prior to and throughout step 1 of the splicing reaction. According to PubMed:8943336, it leaves the spliceosome before reaction 1. Interacts with SPP2.

It localises to the nucleus. The enzyme catalyses ATP + H2O = ADP + phosphate + H(+). Its function is as follows. Involved in pre-mRNA splicing. Is required together with ATP and at least one other factor, for the first cleavage-ligation reaction. Functions as a molecular motor in the activation of the precatalytic spliceosome for the first transesterification reaction of pre-mRNA splicing by hydrolyzing ATP to cause the activation of the spliceosome without the occurrence of splicing. Capable of hydrolyzing nucleoside triphosphates in the presence of single-stranded RNAs such as poly(U). In Saccharomyces cerevisiae (strain ATCC 204508 / S288c) (Baker's yeast), this protein is Pre-mRNA-splicing factor ATP-dependent RNA helicase-like protein PRP2 (PRP2).